The chain runs to 37 residues: Alpha-conotoxin LvIA (37 aa).

A propeptide spanning residues 1-20 (FRGRDAAAKASGLVGLTDRR) is cleaved from the precursor. 2 cysteine pairs are disulfide-bonded: cysteine 22–cysteine 28 and cysteine 23–cysteine 36. The ser-Xaa-Pro motif, crucial for potent interaction with nAChR stretch occupies residues 24–26 (SHP). Cysteine 36 is modified (cysteine amide).

The protein belongs to the conotoxin A superfamily. In terms of tissue distribution, expressed by the venom duct.

It is found in the secreted. Functionally, alpha-conotoxins act on postsynaptic membranes, they bind to the nicotinic acetylcholine receptors (nAChR) and thus inhibit them. This toxin blocks alpha-3-beta-2/CHRNA3-CHRNB2 nAChR with high selectivity (IC(50)=8.67 nM (on rat) and 17.5 (on human)). Also has weaker activity on alpha-6/alpha-3-beta-2-beta-3 (CHRNA6/CHRNA3-CHRNB2-CHRNB3) (IC(50)=108 nM (on rat)), alpha-6/alpha-3-beta-4 (CHRNA6/CHRNA3-CHRNB4) (IC(50)=121 nM (on rat)), alpha-3-beta-4 (CHRNA3-CHRNB4) (IC(50)=148 nM (on rat)), and alpha-7/CHRNA7 nAChRs (IC(50)=3000 nM (on rat)). When tested on mouse with hot-plate tests, this toxin significantly increases the base pain threshold and shows analgesic effects. The chain is Alpha-conotoxin LvIA from Conus lividus (Livid cone).